Consider the following 269-residue polypeptide: Protein RKD1 (269 aa).

Residues 106–195 form the RWP-RK domain; sequence TTTTKKRRCR…EKMEGEENED (90 aa). Residues 175-216 are a coiled coil; the sequence is LQKLISNVKELEKMEGEENEDKLRNALEKLEKEKKTIEKLPD. Residues 230-269 form a disordered region; it reads CFKANHKRKRRSGMSTPITSSSSSASASSSSYSSVSGFER. Low complexity predominate over residues 249–269; it reads SSSSSASASSSSYSSVSGFER.

The protein resides in the nucleus. Putative transcription factor. This chain is Protein RKD1 (RKD1), found in Arabidopsis thaliana (Mouse-ear cress).